A 137-amino-acid polypeptide reads, in one-letter code: Putative pre-16S rRNA nuclease (137 aa).

Belongs to the YqgF nuclease family.

The protein resides in the cytoplasm. Could be a nuclease involved in processing of the 5'-end of pre-16S rRNA. In Clostridium botulinum (strain 657 / Type Ba4), this protein is Putative pre-16S rRNA nuclease.